We begin with the raw amino-acid sequence, 163 residues long: MNKKVLTFLGISFVIIVLDLTTKSLAEKYLADKAIEIIPGLFNLVLVWNKGAAFGMLAEAPETIRKLMLVGSSIIAAVITAGYVFKSNAKLSNLEVLSLALICGGSVGNLYDRFMLGQVRDFLDFYINDHHWPAFNVADASITIGIALFIGYELFWKKRRITN.

4 helical membrane passes run 5–25 (VLTFLGISFVIIVLDLTTKSL), 37–57 (IIPGLFNLVLVWNKGAAFGML), 67–87 (LMLVGSSIIAAVITAGYVFKS), and 91–111 (LSNLEVLSLALICGGSVGNLY). Active-site residues include D121 and D139. A helical transmembrane segment spans residues 132–152 (WPAFNVADASITIGIALFIGY).

It belongs to the peptidase A8 family.

The protein resides in the cell inner membrane. It catalyses the reaction Release of signal peptides from bacterial membrane prolipoproteins. Hydrolyzes -Xaa-Yaa-Zaa-|-(S,diacylglyceryl)Cys-, in which Xaa is hydrophobic (preferably Leu), and Yaa (Ala or Ser) and Zaa (Gly or Ala) have small, neutral side chains.. The protein operates within protein modification; lipoprotein biosynthesis (signal peptide cleavage). This protein specifically catalyzes the removal of signal peptides from prolipoproteins. This chain is Lipoprotein signal peptidase, found in Sulfurihydrogenibium sp. (strain YO3AOP1).